A 212-amino-acid chain; its full sequence is N-(5'-phosphoribosyl)anthranilate isomerase (212 aa).

It belongs to the TrpF family.

It carries out the reaction N-(5-phospho-beta-D-ribosyl)anthranilate = 1-(2-carboxyphenylamino)-1-deoxy-D-ribulose 5-phosphate. Its pathway is amino-acid biosynthesis; L-tryptophan biosynthesis; L-tryptophan from chorismate: step 3/5. The protein is N-(5'-phosphoribosyl)anthranilate isomerase of Microcystis aeruginosa (strain NIES-843 / IAM M-2473).